The primary structure comprises 163 residues: Nucleotide-binding protein KPN78578_03700 (163 aa).

It belongs to the YajQ family.

Nucleotide-binding protein. This chain is Nucleotide-binding protein KPN78578_03700, found in Klebsiella pneumoniae subsp. pneumoniae (strain ATCC 700721 / MGH 78578).